Here is a 231-residue protein sequence, read N- to C-terminus: NADH-ubiquinone oxidoreductase chain 4 (231 aa).

6 helical membrane-spanning segments follow: residues 1 to 21 (PIAGSMVLAAILLKLGGYGII), 34 to 54 (MFLPFIVLALWGAILANLTCL), 61 to 80 (SLIAYSSISHMGLVVAAIII), 84 to 106 (WGLTGAMTLMIAHGFTSSALFCL), 128 to 148 (ILPMTTTWWLLANLMNIATPP), and 169 to 189 (TIILLGLSMLITASYSLHMFL).

The protein belongs to the complex I subunit 4 family.

Its subcellular location is the mitochondrion membrane. It catalyses the reaction a ubiquinone + NADH + 5 H(+)(in) = a ubiquinol + NAD(+) + 4 H(+)(out). Functionally, core subunit of the mitochondrial membrane respiratory chain NADH dehydrogenase (Complex I) that is believed to belong to the minimal assembly required for catalysis. Complex I functions in the transfer of electrons from NADH to the respiratory chain. The immediate electron acceptor for the enzyme is believed to be ubiquinone. The sequence is that of NADH-ubiquinone oxidoreductase chain 4 (MT-ND4) from Atropoides picadoi (Picado's pit viper).